The following is a 162-amino-acid chain: Flagellar assembly factor FliW (162 aa).

Belongs to the FliW family. In terms of assembly, interacts with translational regulator CsrA and flagellin(s).

The protein localises to the cytoplasm. Functionally, acts as an anti-CsrA protein, binds CsrA and prevents it from repressing translation of its target genes, one of which is flagellin. Binds to flagellin and participates in the assembly of the flagellum. The chain is Flagellar assembly factor FliW from Magnetococcus marinus (strain ATCC BAA-1437 / JCM 17883 / MC-1).